Reading from the N-terminus, the 175-residue chain is RNA pyrophosphohydrolase (175 aa).

The Nudix hydrolase domain occupies Gly6–Lys149. Positions Gly38–Gly59 match the Nudix box motif.

Belongs to the Nudix hydrolase family. RppH subfamily. Requires a divalent metal cation as cofactor.

Its function is as follows. Accelerates the degradation of transcripts by removing pyrophosphate from the 5'-end of triphosphorylated RNA, leading to a more labile monophosphorylated state that can stimulate subsequent ribonuclease cleavage. The chain is RNA pyrophosphohydrolase from Serratia proteamaculans (strain 568).